The chain runs to 363 residues: NAD(P)H-quinone oxidoreductase subunit 1, chloroplastic (363 aa).

6 consecutive transmembrane segments (helical) span residues 30–50 (FLPILTLVLGITIGVLVIVWL), 104–124 (IAVISILLSYSVIPFSYHLVL), 129–149 (IGVFLWIAISSIAPIGLLMSG), 248–268 (YSGIKFGLFYVASYLNLLVSS), 300–320 (VFGTTIGIFITLAKTYFFLFI), and 343–363 (FLLPISLGNLLLTTSFQLLSL).

Belongs to the complex I subunit 1 family. In terms of assembly, NDH is composed of at least 16 different subunits, 5 of which are encoded in the nucleus.

It localises to the plastid. The protein localises to the chloroplast thylakoid membrane. It catalyses the reaction a plastoquinone + NADH + (n+1) H(+)(in) = a plastoquinol + NAD(+) + n H(+)(out). The catalysed reaction is a plastoquinone + NADPH + (n+1) H(+)(in) = a plastoquinol + NADP(+) + n H(+)(out). Its function is as follows. NDH shuttles electrons from NAD(P)H:plastoquinone, via FMN and iron-sulfur (Fe-S) centers, to quinones in the photosynthetic chain and possibly in a chloroplast respiratory chain. The immediate electron acceptor for the enzyme in this species is believed to be plastoquinone. Couples the redox reaction to proton translocation, and thus conserves the redox energy in a proton gradient. This Eucalyptus globulus subsp. globulus (Tasmanian blue gum) protein is NAD(P)H-quinone oxidoreductase subunit 1, chloroplastic.